The sequence spans 586 residues: Lipoprotein LpqB (586 aa).

Positions 1–17 are cleaved as a signal peptide; sequence MVRSVFALVFAAVLLGG. Residue Cys18 is the site of N-palmitoyl cysteine attachment. The S-diacylglycerol cysteine moiety is linked to residue Cys18. Positions 26-45 are disordered; that stretch reads APQAIGTVERPAPSNLPKPI.

This sequence belongs to the LpqB lipoprotein family.

Its subcellular location is the cell membrane. The sequence is that of Lipoprotein LpqB from Mycobacterium ulcerans (strain Agy99).